A 309-amino-acid polypeptide reads, in one-letter code: Protein FdhE (309 aa).

This sequence belongs to the FdhE family.

It is found in the cytoplasm. Its function is as follows. Necessary for formate dehydrogenase activity. The polypeptide is Protein FdhE (Salmonella typhimurium (strain LT2 / SGSC1412 / ATCC 700720)).